The sequence spans 840 residues: Anaphase-promoting complex subunit CDC16 (840 aa).

2 disordered regions span residues 67-97 and 173-212; these read AART…TSPY and GVVR…TTTT. 3 TPR repeats span residues 229 to 260, 263 to 288, and 296 to 319; these read AIER…YNIS, PDDA…LITR, and ILCR…LDVI. The segment at 329 to 350 is disordered; that stretch reads PSTTAANTMSNNGNNSNTSQPV. Positions 330-347 are enriched in low complexity; it reads STTAANTMSNNGNNSNTS. TPR repeat units follow at residues 357 to 388, 393 to 416, 426 to 454, 464 to 492, 499 to 526, 531 to 560, 565 to 593, 600 to 628, 633 to 665, 671 to 703, and 708 to 737; these read MESS…AILV, FEAF…LFDS, KEIM…EILA, DVVR…VLEN, ILPA…LAET, AITW…SSIL, AAAW…TASR, LPKL…AYDI, PLVL…VVKD, RTTI…VLEK, and SEIH…SLYL. The interval 802–840 is disordered; sequence RTQKEIFDQNNKALRKGGHDSKTGSNNADDDFDADMELE. The span at 829–840 shows a compositional bias: acidic residues; it reads ADDDFDADMELE.

Belongs to the APC6/CDC16 family. As to quaternary structure, the APC/C is composed of at least 13 subunits that stay tightly associated throughout the cell cycle: APC1, APC2, APC4, APC5, APC9, APC11, CDC16, CDC23, CDC26, CDC27, DOC1, MND2 and SWM1. Interacts with AMA1. Post-translationally, phosphorylated by CDC28, which is required for the early mitotic activity of the APC/C in its CDC20-bound form.

The protein resides in the nucleus. It participates in protein modification; protein ubiquitination. Functionally, component of the anaphase promoting complex/cyclosome (APC/C), a cell cycle-regulated E3 ubiquitin-protein ligase complex that controls progression through mitosis and the G1 phase of the cell cycle. The APC/C is thought to confer substrate specificity and, in the presence of ubiquitin-conjugating E2 enzymes, it catalyzes the formation of protein-ubiquitin conjugates that are subsequently degraded by the 26S proteasome. In early mitosis, the APC/C is activated by CDC20 and targets securin PDS1, the B-type cyclin CLB5, and other anaphase inhibitory proteins for proteolysis, thereby triggering the separation of sister chromatids at the metaphase-to-anaphase transition. In late mitosis and in G1, degradation of CLB5 allows activation of the APC/C by CDH1, which is needed to destroy CDC20 and the B-type cyclin CLB2 to allow exit from mitosis and creating the low CDK state necessary for cytokinesis and for reforming prereplicative complexes in G1 prior to another round of replication. The chain is Anaphase-promoting complex subunit CDC16 (CDC16) from Saccharomyces cerevisiae (strain ATCC 204508 / S288c) (Baker's yeast).